The sequence spans 81 residues: Cytotoxin 5b (81 aa).

Positions 1–21 (MKTLLLTLLVVTIVCLDLGYT) are cleaved as a signal peptide. Disulfide bonds link Cys-24-Cys-42, Cys-35-Cys-59, Cys-63-Cys-74, and Cys-75-Cys-80.

This sequence belongs to the three-finger toxin family. Short-chain subfamily. Type IA cytotoxin sub-subfamily. In terms of assembly, monomer in solution; Homodimer and oligomer in the presence of negatively charged lipids forming a pore with a size ranging between 20 and 30 Angstroms. In terms of tissue distribution, expressed by the venom gland.

The protein localises to the secreted. Its subcellular location is the target cell membrane. Its function is as follows. Shows cytolytic activity on many different cells by forming pore in lipid membranes. In vivo, increases heart rate or kills the animal by cardiac arrest. In addition, it binds to heparin with high affinity, interacts with Kv channel-interacting protein 1 (KCNIP1) in a calcium-independent manner, and binds to integrin alpha-V/beta-3 (ITGAV/ITGB3) with moderate affinity. The protein is Cytotoxin 5b of Naja sputatrix (Malayan spitting cobra).